The sequence spans 643 residues: MKSKGNPNATFITVKINDVFINAYVDTGATICLADPKIKLKWVKMEKPIKISIADKSVQEIWHRAEMVEIWIRNYKFVAATVCQKSSGMDFVIGNNFLRLYQPFIQGLNYIKLRAPLDKDINQPSKMIYIPVTTPSKILQFAILEKLQDILFELHVQENSKTPLELKVSSTLEEVCDENPLDVKNTNTELVKIELINPEKEVNVPNNIPYSLRDINEFSQECADLVRKGIIEESKSPHSAPAFYVENHNEIKRKKRRMVINYKALNKATIGNAHKLPRIDSILTKVKGSNWFSTLDAKSGYWQLRLHPQSKPLTAFSCPPQKHYQWNVLPFGLKQAPGIYQNFMDKNLEGLENFCLAYIDDILVFTNSSREEHLSKLLVVLERCKEKGLILSKKKAIIARQTIDFLGLTLQENGEIKLQPNVLEKLELFPDAIEDRKQLQRFLGCLNYIADKGFLKEIAKETKNLYPKVSITNPWHWSDLDSKLVNQIKKKCKDLSPLYFPKPEDYLIIETDASGDTWAGCLKAAELLFPKGTKNKVVERLCKYTSGIFSSAEQKYTVHEKETLAALKTMRKWKAELLPKEFTLRTDSSYVTGFARHNLKANYNQGRLVRWQLEFLQYPARVEYIKGEKNSLADTLTREWKQQ.

The 204-residue stretch at 6–209 (NPNATFITVK…KEVNVPNNIP (204 aa)) folds into the Peptidase A3A domain. Residue aspartate 26 is the For protease activity of the active site. Residues 226–410 (VRKGIIEESK…QTIDFLGLTL (185 aa)) enclose the Reverse transcriptase domain. Residues aspartate 296, aspartate 360, and aspartate 361 each contribute to the Mg(2+) site.

It belongs to the caulimoviridae enzymatic polyprotein family.

It catalyses the reaction DNA(n) + a 2'-deoxyribonucleoside 5'-triphosphate = DNA(n+1) + diphosphate. Functionally, encodes for at least two polypeptides: protease (PR) and reverse transcriptase (RT). The protease processes the polyprotein in cis. Reverse transcriptase is multifunctional enzyme that converts the viral RNA genome into dsDNA in viral cytoplasmic capsids. This enzyme displays a DNA polymerase activity that can copy either DNA or RNA templates, and a ribonuclease H (RNase H) activity that cleaves the RNA strand of RNA-DNA heteroduplexes in a partially processive 3'- to 5'-endonucleasic mode. Neo-synthesized pregenomic RNA (pgRNA) are encapsidated, and reverse-transcribed inside the nucleocapsid. Partial (+)DNA is synthesized from the (-)DNA template and generates the relaxed circular DNA (RC-DNA) genome. After budding and infection, the RC-DNA migrates in the nucleus, and is converted into a plasmid-like covalently closed circular DNA (cccDNA). The sequence is that of Enzymatic polyprotein from Cestrum parqui (CmYLCV).